The following is a 786-amino-acid chain: Signal transducer and activator of transcription 5B (786 aa).

At Tyr-90 the chain carries Phosphotyrosine. Ser-128 carries the post-translational modification Phosphoserine. Residues 589–686 form the SH2 domain; sequence WNDGAILGFV…EVYSKYYTPV (98 aa). Phosphotyrosine occurs at positions 682 and 699.

This sequence belongs to the transcription factor STAT family. Upon activation, forms a homodimer or a heterodimer with a related family member. Binds NR3C1. Interacts with NCOA1. Interacts with NMI. Interacts with SOCS7. Interacts (via SH2 domain) with INSR. Interacts with CPEB3; this inhibits STAT5B-mediated transcriptional activation. In terms of processing, tyrosine phosphorylated in response to signaling via activated KIT, resulting in translocation to the nucleus. Tyrosine phosphorylated in response to signaling via activated FLT3; wild-type FLT3 results in much weaker phosphorylation than constitutively activated mutant FLT3. Alternatively, can be phosphorylated by JAK2. Phosphorylation at Tyr-699 by PTK6 or HCK leads to an increase of its transcriptional activity.

The protein localises to the cytoplasm. The protein resides in the nucleus. In terms of biological role, carries out a dual function: signal transduction and activation of transcription. Mediates cellular responses to the cytokine KITLG/SCF and other growth factors. Binds to the GAS element and activates PRL-induced transcription. Positively regulates hematopoietic/erythroid differentiation. This Rattus norvegicus (Rat) protein is Signal transducer and activator of transcription 5B (Stat5b).